Here is a 147-residue protein sequence, read N- to C-terminus: Small ribosomal subunit protein bS6 (147 aa).

The tract at residues 107–147 is disordered; it reads KEGRERKARPARAERRDDTEAEDLSDEEGVEAEDFEEEQGV. Over residues 125 to 147 the composition is skewed to acidic residues; the sequence is TEAEDLSDEEGVEAEDFEEEQGV.

It belongs to the bacterial ribosomal protein bS6 family.

Binds together with bS18 to 16S ribosomal RNA. This is Small ribosomal subunit protein bS6 from Cellvibrio japonicus (strain Ueda107) (Pseudomonas fluorescens subsp. cellulosa).